The following is a 177-amino-acid chain: Large ribosomal subunit protein uL6 (177 aa).

Belongs to the universal ribosomal protein uL6 family. In terms of assembly, part of the 50S ribosomal subunit.

In terms of biological role, this protein binds to the 23S rRNA, and is important in its secondary structure. It is located near the subunit interface in the base of the L7/L12 stalk, and near the tRNA binding site of the peptidyltransferase center. The chain is Large ribosomal subunit protein uL6 from Paracidovorax citrulli (strain AAC00-1) (Acidovorax citrulli).